Consider the following 228-residue polypeptide: 2,3-bisphosphoglycerate-dependent phosphoglycerate mutase (228 aa).

Residues 8–15, 21–22, R60, 87–90, K98, 114–115, and 180–181 contribute to the substrate site; these read RHGQSEWN, TG, ERHY, RR, and GN. H9 (tele-phosphohistidine intermediate) is an active-site residue. The active-site Proton donor/acceptor is the E87.

Belongs to the phosphoglycerate mutase family. BPG-dependent PGAM subfamily. In terms of assembly, homodimer.

The enzyme catalyses (2R)-2-phosphoglycerate = (2R)-3-phosphoglycerate. Its pathway is carbohydrate degradation; glycolysis; pyruvate from D-glyceraldehyde 3-phosphate: step 3/5. Its function is as follows. Catalyzes the interconversion of 2-phosphoglycerate and 3-phosphoglycerate. This chain is 2,3-bisphosphoglycerate-dependent phosphoglycerate mutase, found in Zymomonas mobilis subsp. mobilis (strain ATCC 31821 / ZM4 / CP4).